Consider the following 388-residue polypeptide: LL-diaminopimelate aminotransferase (388 aa).

2 residues coordinate substrate: tyrosine 16 and glycine 41. Pyridoxal 5'-phosphate contacts are provided by residues tyrosine 70, 104-105 (SK), tyrosine 129, asparagine 179, tyrosine 210, and 239-241 (SLS). 3 residues coordinate substrate: lysine 105, tyrosine 129, and asparagine 179. Lysine 242 bears the N6-(pyridoxal phosphate)lysine mark. Residue arginine 250 coordinates pyridoxal 5'-phosphate. Arginine 368 provides a ligand contact to substrate.

Belongs to the class-I pyridoxal-phosphate-dependent aminotransferase family. LL-diaminopimelate aminotransferase subfamily. In terms of assembly, homodimer. Pyridoxal 5'-phosphate serves as cofactor.

It catalyses the reaction (2S,6S)-2,6-diaminopimelate + 2-oxoglutarate = (S)-2,3,4,5-tetrahydrodipicolinate + L-glutamate + H2O + H(+). Its pathway is amino-acid biosynthesis; L-lysine biosynthesis via DAP pathway; LL-2,6-diaminopimelate from (S)-tetrahydrodipicolinate (aminotransferase route): step 1/1. Its function is as follows. Involved in the synthesis of meso-diaminopimelate (m-DAP or DL-DAP), required for both lysine and peptidoglycan biosynthesis. Catalyzes the direct conversion of tetrahydrodipicolinate to LL-diaminopimelate. This chain is LL-diaminopimelate aminotransferase, found in Nitratidesulfovibrio vulgaris (strain ATCC 29579 / DSM 644 / CCUG 34227 / NCIMB 8303 / VKM B-1760 / Hildenborough) (Desulfovibrio vulgaris).